The following is a 496-amino-acid chain: Glutamyl-tRNA(Gln) amidotransferase subunit A, mitochondrial (496 aa).

Catalysis depends on charge relay system residues Lys75 and Ser162. Ser186 acts as the Acyl-ester intermediate in catalysis.

It belongs to the amidase family. GatA subfamily. In terms of assembly, subunit of the heterotrimeric GatCAB amidotransferase (AdT) complex, composed of A, B and C subunits.

Its subcellular location is the mitochondrion. The enzyme catalyses L-glutamyl-tRNA(Gln) + L-glutamine + ATP + H2O = L-glutaminyl-tRNA(Gln) + L-glutamate + ADP + phosphate + H(+). In terms of biological role, allows the formation of correctly charged Gln-tRNA(Gln) through the transamidation of misacylated Glu-tRNA(Gln) in the mitochondria. The reaction takes place in the presence of glutamine and ATP through an activated gamma-phospho-Glu-tRNA(Gln). The chain is Glutamyl-tRNA(Gln) amidotransferase subunit A, mitochondrial from Pediculus humanus subsp. corporis (Body louse).